A 1241-amino-acid chain; its full sequence is ATP-dependent helicase/nuclease subunit A (1241 aa).

Residues serine 12–arginine 485 form the UvrD-like helicase ATP-binding domain. Residue alanine 33–threonine 40 participates in ATP binding. The UvrD-like helicase C-terminal domain occupies glycine 505 to glycine 805.

Belongs to the helicase family. AddA subfamily. As to quaternary structure, heterodimer of AddA and AddB/RexB. Mg(2+) is required as a cofactor.

The enzyme catalyses Couples ATP hydrolysis with the unwinding of duplex DNA by translocating in the 3'-5' direction.. It carries out the reaction ATP + H2O = ADP + phosphate + H(+). The heterodimer acts as both an ATP-dependent DNA helicase and an ATP-dependent, dual-direction single-stranded exonuclease. Recognizes the chi site generating a DNA molecule suitable for the initiation of homologous recombination. The AddA nuclease domain is required for chi fragment generation; this subunit has the helicase and 3' -&gt; 5' nuclease activities. In Bacillus cereus (strain ZK / E33L), this protein is ATP-dependent helicase/nuclease subunit A.